We begin with the raw amino-acid sequence, 119 residues long: Large ribosomal subunit protein bL20 (119 aa).

The protein belongs to the bacterial ribosomal protein bL20 family.

In terms of biological role, binds directly to 23S ribosomal RNA and is necessary for the in vitro assembly process of the 50S ribosomal subunit. It is not involved in the protein synthesizing functions of that subunit. This is Large ribosomal subunit protein bL20 from Erythrobacter litoralis (strain HTCC2594).